The sequence spans 113 residues: EVKLEESGGGLVQPGGSMKLSCVASGFTFSNYWMNWVRQSPEKGLEWVAEIRLKSHNYATHYAESVKGRFTISRDDSKSSVYLQMNNLRAEDTGIYYCTTGFAYWGQGTLVPV.

Residues 1–113 (EVKLEESGGG…YWGQGTLVPV (113 aa)) form the Ig-like domain. A disulfide bond links Cys-22 and Cys-98.

This Mus musculus (Mouse) protein is Ig heavy chain V-III region U61.